The sequence spans 414 residues: ZP domain-containing protein (414 aa).

The signal sequence occupies residues 1–17; the sequence is MFLYSFVFLMLLGLSSA. Residues 18-65 are disordered; the sequence is QTESATSPDEVETEPTMSTDQPETSPSMSTETEPTTETPPVTTPPPPD. The Extracellular portion of the chain corresponds to 18 to 364; it reads QTESATSPDE…GAQEAVSSLT (347 aa). A compositionally biased stretch (low complexity) spans 39–57; it reads PETSPSMSTETEPTTETPP. A ZP domain is found at 70–323; the sequence is ICTNEKMEVF…SRCAKGCETS (254 aa). Cys241 and Cys302 are joined by a disulfide. A helical membrane pass occupies residues 365–385; that stretch reads IFAAVAGVLGVIVLFLAVALV. Topologically, residues 386–414 are cytoplasmic; sequence MLYKRYRSPQSATRVVYTKTANEEGKLLV.

Component of the acid-insoluble and acid-soluble organic matrix of the aragonitic skeleton (at protein level).

It is found in the membrane. The polypeptide is ZP domain-containing protein (Acropora millepora (Staghorn coral)).